Consider the following 349-residue polypeptide: Prostaglandin reductase 1 (349 aa).

A Phosphothreonine modification is found at threonine 18. Serine 20 carries the phosphoserine modification. Residues 152-155, lysine 178, tyrosine 193, asparagine 217, 239-245, 270-272, and asparagine 321 each bind NADP(+); these read GAVG, CGAISMY, and FIF. Lysine 178 bears the N6-(2-hydroxyisobutyryl)lysine; alternate mark. An N6-acetyllysine; alternate modification is found at lysine 178.

This sequence belongs to the NADP-dependent oxidoreductase L4BD family. In terms of assembly, monomer or homodimer.

The protein localises to the cytoplasm. It carries out the reaction 13,14-dihydro-15-oxo-prostaglandin E1 + NADP(+) = 15-oxoprostaglandin E1 + NADPH + H(+). It catalyses the reaction 13,14-dihydro-15-oxo-prostaglandin E2 + NADP(+) = 15-oxoprostaglandin E2 + NADPH + H(+). The catalysed reaction is 13,14-dihydro-15-oxo-prostaglandin F1alpha + NADP(+) = 15-oxoprostaglandin F1alpha + NADPH + H(+). The enzyme catalyses 13,14-dihydro-15-oxo-PGF2alpha + NADP(+) = 15-oxoprostaglandin F2alpha + NADPH + H(+). It carries out the reaction leukotriene B4 + NADP(+) = 12-oxo-leukotriene B4 + NADPH + H(+). It catalyses the reaction 20-hydroxy-leukotriene B4 + NADP(+) = 12-oxo-20-hydroxy-leukotriene B4 + NADPH + H(+). The catalysed reaction is 6-trans-leukotriene B4 + NADP(+) = 12-oxo-(5S)-hydroxy-(6E,8E,10E,14Z)-eicosatetraenoate + NADPH + H(+). The enzyme catalyses (5S,12S)-dihydroxy-(6E,10E,12E,14Z)-eicosatetraenoate + NADP(+) = 12-oxo-(5S)-hydroxy-(6E,8E,10E,14Z)-eicosatetraenoate + NADPH + H(+). It carries out the reaction an n-alkanal + NADP(+) = an alk-2-enal + NADPH + H(+). It catalyses the reaction hexanal + NADP(+) = (E)-hex-2-enal + NADPH + H(+). The catalysed reaction is octanal + NADP(+) = (2E)-octenal + NADPH + H(+). The enzyme catalyses decanal + NADP(+) = (2E)-decenal + NADPH + H(+). It carries out the reaction dodecanal + NADP(+) = (2E)-dodecenal + NADPH + H(+). It catalyses the reaction 4-hydroxynonanal + NADP(+) = (E)-4-hydroxynon-2-enal + NADPH + H(+). The catalysed reaction is pentan-2-one + NADP(+) = (E)-pent-3-en-2-one + NADPH + H(+). The enzyme catalyses nonan-2-one + NADP(+) = (3E)-nonen-2-one + NADPH + H(+). Its function is as follows. NAD(P)H-dependent oxidoreductase involved in metabolic inactivation of pro- and anti-inflammatory eicosanoids: prostaglandins (PG), leukotrienes (LT) and lipoxins (LX). Catalyzes with high efficiency the reduction of the 13,14 double bond of 15-oxoPGs, including 15-oxo-PGE1, 15-oxo-PGE2, 15-oxo-PGF1-alpha and 15-oxo-PGF2-alpha. Catalyzes with lower efficiency the oxidation of the hydroxyl group at C12 of LTB4 and its derivatives, converting them into biologically less active 12-oxo-LTB4 metabolites. Reduces 15-oxo-LXA4 to 13,14 dihydro-15-oxo-LXA4, enhancing neutrophil recruitment at the inflammatory site. Plays a role in metabolic detoxification of alkenals and ketones. Reduces alpha,beta-unsaturated alkenals and ketones, particularly those with medium-chain length, showing highest affinity toward (2E)-decenal and (3E)-3-nonen-2-one. May inactivate 4-hydroxy-2-nonenal, a cytotoxic lipid constituent of oxidized low-density lipoprotein particles. The polypeptide is Prostaglandin reductase 1 (PTGR1) (Oryctolagus cuniculus (Rabbit)).